The primary structure comprises 338 residues: Cytochrome P450 monooxygenase easK (338 aa).

A signal peptide spans 1-16 (MLLLTFTLPVVTLLLA). 2 N-linked (GlcNAc...) asparagine glycosylation sites follow: Asn-240 and Asn-327.

This sequence belongs to the cytochrome P450 family. Heme serves as cofactor.

It functions in the pathway alkaloid biosynthesis; ergot alkaloid biosynthesis. Cytochrome P450 monooxygenase; part of the gene cluster that mediates the biosynthesis of fumiclavanine C, a fungal ergot alkaloid. DmaW catalyzes the first step of ergot alkaloid biosynthesis by condensing dimethylallyl diphosphate (DMAP) and tryptophan to form 4-dimethylallyl-L-tryptophan. The second step is catalyzed by the methyltransferase easF that methylates 4-dimethylallyl-L-tryptophan in the presence of S-adenosyl-L-methionine, resulting in the formation of 4-dimethylallyl-L-abrine. The catalase easC and the FAD-dependent oxidoreductase easE then transform 4-dimethylallyl-L-abrine to chanoclavine-I which is further oxidized by EasD in the presence of NAD(+), resulting in the formation of chanoclavine-I aldehyde. EasA reduces chanoclavine-I aldehyde to dihydrochanoclavine-I aldehyde that spontaneously dehydrates to form 6,8-dimethyl-6,7-didehydroergoline. EasG then catalyzes the reduction of 6,8-dimethyl-6,7-didehydroergoline to form festuclavine. Hydrolysis of festuclavine by easM then leads to the formation of fumigaclavine B which is in turn acetylated by easN to fumigaclavine A. Finally, easL catalyzes the conversion of fumigaclavine A into fumigaclavine C by attaching a dimethylallyl moiety to C-2 of the indole nucleus. The role of the cytochrome P450 monooxygenase easK within the cluster has not been identified yet. This Aspergillus fumigatus (strain ATCC MYA-4609 / CBS 101355 / FGSC A1100 / Af293) (Neosartorya fumigata) protein is Cytochrome P450 monooxygenase easK.